Here is a 107-residue protein sequence, read N- to C-terminus: Large ribosomal subunit protein uL24 (107 aa).

This sequence belongs to the universal ribosomal protein uL24 family. In terms of assembly, part of the 50S ribosomal subunit.

Its function is as follows. One of two assembly initiator proteins, it binds directly to the 5'-end of the 23S rRNA, where it nucleates assembly of the 50S subunit. In terms of biological role, one of the proteins that surrounds the polypeptide exit tunnel on the outside of the subunit. The polypeptide is Large ribosomal subunit protein uL24 (Neisseria gonorrhoeae (strain ATCC 700825 / FA 1090)).